Consider the following 189-residue polypeptide: MIYAMYGVLEDIENGKLYLNVNEIVYEIVVGDTGYFEDFLNEKIKVFTKMIVNDDEISLYGFSDVLKLKLFEKLILVNKLGPKSALKIITSSDVSYIVSAIVNEDVKTLSTLPGIGPKTAERIILELKDSMKEFDVTLTEKDKKILEAIEALVTLGFSRNQSKKAVTQILKKDDSLDDIIKKALKFLSR.

The domain I stretch occupies residues 1 to 63 (MIYAMYGVLE…DDEISLYGFS (63 aa)). Residues 64–135 (DVLKLKLFEK…ELKDSMKEFD (72 aa)) form a domain II region. The interval 135-139 (DVTLT) is flexible linker. Residues 140 to 189 (EKDKKILEAIEALVTLGFSRNQSKKAVTQILKKDDSLDDIIKKALKFLSR) form a domain III region.

Belongs to the RuvA family. In terms of assembly, homotetramer. Forms an RuvA(8)-RuvB(12)-Holliday junction (HJ) complex. HJ DNA is sandwiched between 2 RuvA tetramers; dsDNA enters through RuvA and exits via RuvB. An RuvB hexamer assembles on each DNA strand where it exits the tetramer. Each RuvB hexamer is contacted by two RuvA subunits (via domain III) on 2 adjacent RuvB subunits; this complex drives branch migration. In the full resolvosome a probable DNA-RuvA(4)-RuvB(12)-RuvC(2) complex forms which resolves the HJ.

The protein localises to the cytoplasm. In terms of biological role, the RuvA-RuvB-RuvC complex processes Holliday junction (HJ) DNA during genetic recombination and DNA repair, while the RuvA-RuvB complex plays an important role in the rescue of blocked DNA replication forks via replication fork reversal (RFR). RuvA specifically binds to HJ cruciform DNA, conferring on it an open structure. The RuvB hexamer acts as an ATP-dependent pump, pulling dsDNA into and through the RuvAB complex. HJ branch migration allows RuvC to scan DNA until it finds its consensus sequence, where it cleaves and resolves the cruciform DNA. This Thermosipho melanesiensis (strain DSM 12029 / CIP 104789 / BI429) protein is Holliday junction branch migration complex subunit RuvA.